Here is a 280-residue protein sequence, read N- to C-terminus: Shikimate dehydrogenase (NADP(+)) (280 aa).

Residues 20 to 22 (TLS) and T67 each bind shikimate. Catalysis depends on K71, which acts as the Proton acceptor. 2 residues coordinate shikimate: N92 and D107. Residues 131 to 135 (GAGGA), 154 to 159 (NRTIDK), and L224 contribute to the NADP(+) site. Residue Y226 participates in shikimate binding. An NADP(+)-binding site is contributed by G247.

It belongs to the shikimate dehydrogenase family. Homodimer.

The enzyme catalyses shikimate + NADP(+) = 3-dehydroshikimate + NADPH + H(+). It participates in metabolic intermediate biosynthesis; chorismate biosynthesis; chorismate from D-erythrose 4-phosphate and phosphoenolpyruvate: step 4/7. In terms of biological role, involved in the biosynthesis of the chorismate, which leads to the biosynthesis of aromatic amino acids. Catalyzes the reversible NADPH linked reduction of 3-dehydroshikimate (DHSA) to yield shikimate (SA). This chain is Shikimate dehydrogenase (NADP(+)), found in Carboxydothermus hydrogenoformans (strain ATCC BAA-161 / DSM 6008 / Z-2901).